A 333-amino-acid chain; its full sequence is MTAVAPEGRPLLRIEARNAQTPIERKPSWIRTRLRTGPQYQDVKGLVQSAGLHTVCEEAGCPNIYECWEDREATFLIGGEVCTRRCDFCQIDSGRPAPLDHDEPRRVAESVATMGLRYATVTGVARDDLADGGSWLYAETVRQIHARSADTGVEVLIPDFGGRPDQLGEVFEAAPEVLAHNLETVPRIFRRIRPAFRYERSLDVLRQARQAGLVTKSNLILGLGETAEEIHTALRDLRSAGCELLTVTQYLRPTPRHHPVERWVRPEEFLDWGRVGAELGFSGVMSGPLVRSSYRASRLYQQAMTARDQDRSEMSVPPESVSENSHGQRPSPW.

[4Fe-4S] cluster-binding residues include C56, C61, C67, C82, C86, C89, and S293. Positions 68 to 282 (WEDREATFLI…GRVGAELGFS (215 aa)) constitute a Radical SAM core domain. The disordered stretch occupies residues 301 to 333 (QQAMTARDQDRSEMSVPPESVSENSHGQRPSPW). The segment covering 314–325 (MSVPPESVSENS) has biased composition (low complexity).

The protein belongs to the radical SAM superfamily. Lipoyl synthase family. [4Fe-4S] cluster serves as cofactor.

Its subcellular location is the cytoplasm. It carries out the reaction [[Fe-S] cluster scaffold protein carrying a second [4Fe-4S](2+) cluster] + N(6)-octanoyl-L-lysyl-[protein] + 2 oxidized [2Fe-2S]-[ferredoxin] + 2 S-adenosyl-L-methionine + 4 H(+) = [[Fe-S] cluster scaffold protein] + N(6)-[(R)-dihydrolipoyl]-L-lysyl-[protein] + 4 Fe(3+) + 2 hydrogen sulfide + 2 5'-deoxyadenosine + 2 L-methionine + 2 reduced [2Fe-2S]-[ferredoxin]. It participates in protein modification; protein lipoylation via endogenous pathway; protein N(6)-(lipoyl)lysine from octanoyl-[acyl-carrier-protein]: step 2/2. Its function is as follows. Catalyzes the radical-mediated insertion of two sulfur atoms into the C-6 and C-8 positions of the octanoyl moiety bound to the lipoyl domains of lipoate-dependent enzymes, thereby converting the octanoylated domains into lipoylated derivatives. In Frankia casuarinae (strain DSM 45818 / CECT 9043 / HFP020203 / CcI3), this protein is Lipoyl synthase.